The chain runs to 219 residues: Vacuolar protein sorting-associated protein 32 homolog 2 (219 aa).

2 coiled-coil regions span residues 10 to 41 (KQEA…KKAG) and 117 to 176 (TNID…QLLQ). The tract at residues 168-219 (EELESQLLQPATTAPPLPSVPVPAGRQPARPVPQKRTAEEEELAALQAEMAL) is disordered.

Belongs to the SNF7 family. Component of the endosomal sorting required for transport complex III (ESCRT-III), composed at least of VPS2, VPS20, VPS24 and VPS32. Interacts with SKD1. Interacts with BRO1/ALIX.

The protein localises to the endosome. Its function is as follows. Component of the ESCRT-III complex, which is required for multivesicular bodies (MVBs) formation and sorting of endosomal cargo proteins into MVBs. The ESCRT-III complex is probably involved in the concentration of MVB cargo. The protein is Vacuolar protein sorting-associated protein 32 homolog 2 (VPS32.2) of Arabidopsis thaliana (Mouse-ear cress).